A 338-amino-acid polypeptide reads, in one-letter code: tRNA N6-adenosine threonylcarbamoyltransferase (338 aa).

Residues His-109 and His-113 each coordinate Fe cation. Residues 132–136 (AISGA), Asp-165, Gly-178, and Asn-277 contribute to the substrate site. Asp-302 is a binding site for Fe cation.

The protein belongs to the KAE1 / TsaD family. Requires Fe(2+) as cofactor.

It is found in the cytoplasm. The enzyme catalyses L-threonylcarbamoyladenylate + adenosine(37) in tRNA = N(6)-L-threonylcarbamoyladenosine(37) in tRNA + AMP + H(+). Its function is as follows. Required for the formation of a threonylcarbamoyl group on adenosine at position 37 (t(6)A37) in tRNAs that read codons beginning with adenine. Is involved in the transfer of the threonylcarbamoyl moiety of threonylcarbamoyl-AMP (TC-AMP) to the N6 group of A37, together with TsaE and TsaB. TsaD likely plays a direct catalytic role in this reaction. The polypeptide is tRNA N6-adenosine threonylcarbamoyltransferase (Chlamydia trachomatis serovar L2b (strain UCH-1/proctitis)).